The following is a 166-amino-acid chain: Interleukin-2 (166 aa).

The first 20 residues, Met-1–Ser-20, serve as a signal peptide directing secretion. O-linked (GalNAc...) threonine glycosylation occurs at Thr-23. A disulfide bond links Cys-89 and Cys-137.

The protein belongs to the IL-2 family.

Its subcellular location is the secreted. In terms of biological role, cytokine produced by activated CD4-positive helper T-cells and to a lesser extend activated CD8-positive T-cells and natural killer (NK) cells that plays pivotal roles in the immune response and tolerance. Binds to a receptor complex composed of either the high-affinity trimeric IL-2R (IL2RA/CD25, IL2RB/CD122 and IL2RG/CD132) or the low-affinity dimeric IL-2R (IL2RB and IL2RG). Interaction with the receptor leads to oligomerization and conformation changes in the IL-2R subunits resulting in downstream signaling starting with phosphorylation of JAK1 and JAK3. In turn, JAK1 and JAK3 phosphorylate the receptor to form a docking site leading to the phosphorylation of several substrates including STAT5. This process leads to activation of several pathways including STAT, phosphoinositide-3-kinase/PI3K and mitogen-activated protein kinase/MAPK pathways. Functions as a T-cell growth factor and can increase NK-cell cytolytic activity as well. Promotes strong proliferation of activated B-cells and subsequently immunoglobulin production. Plays a pivotal role in regulating the adaptive immune system by controlling the survival and proliferation of regulatory T-cells, which are required for the maintenance of immune tolerance. Moreover, participates in the differentiation and homeostasis of effector T-cell subsets, including Th1, Th2, Th17 as well as memory CD8-positive T-cells. In Mus spretus (Western Mediterranean mouse), this protein is Interleukin-2 (Il2).